Reading from the N-terminus, the 214-residue chain is Adenylate kinase (214 aa).

12-17 (GVGKGT) serves as a coordination point for ATP. The NMP stretch occupies residues 32–61 (STGNIFRSQIASNSELGIKLKEIVESGGYV). Residues Thr-33, Arg-38, 59–61 (GYV), 88–91 (GYPR), and Gln-95 contribute to the AMP site. Residues 126-163 (GRRICPSCNAQYHIYFKKSKLDTKCEIDQSELIQRKDD) form an LID region. An ATP-binding site is contributed by Arg-127. Cys-130, Cys-133, Cys-150, and Asp-153 together coordinate Zn(2+). AMP is bound by residues Arg-160 and Arg-171. Residue Lys-199 coordinates ATP.

This sequence belongs to the adenylate kinase family. As to quaternary structure, monomer.

Its subcellular location is the cytoplasm. It catalyses the reaction AMP + ATP = 2 ADP. The protein operates within purine metabolism; AMP biosynthesis via salvage pathway; AMP from ADP: step 1/1. Functionally, catalyzes the reversible transfer of the terminal phosphate group between ATP and AMP. Plays an important role in cellular energy homeostasis and in adenine nucleotide metabolism. This is Adenylate kinase from Mycoplasmopsis pulmonis (strain UAB CTIP) (Mycoplasma pulmonis).